The primary structure comprises 468 residues: Eukaryotic translation initiation factor 3 subunit M (468 aa).

The disordered stretch occupies residues 40-61 (VAPLIEPLRQQEQSEEEPDRKQ). Residues 206-377 (DLELAQTHVV…SEFLVHRATY (172 aa)) form the PCI domain. The segment at 419–468 (QAAAEEVGQGKSGDKGAKGGDRRRNPQQQQQSQPSQPQQAREVELVGGAE) is disordered. The segment covering 430–442 (SGDKGAKGGDRRR) has biased composition (basic and acidic residues). Positions 444–457 (PQQQQQSQPSQPQQ) are enriched in low complexity.

It belongs to the eIF-3 subunit M family. As to quaternary structure, component of the eukaryotic translation initiation factor 3 (eIF-3) complex.

The protein resides in the cytoplasm. Its function is as follows. Component of the eukaryotic translation initiation factor 3 (eIF-3) complex, which is involved in protein synthesis of a specialized repertoire of mRNAs and, together with other initiation factors, stimulates binding of mRNA and methionyl-tRNAi to the 40S ribosome. The eIF-3 complex specifically targets and initiates translation of a subset of mRNAs involved in cell proliferation. This chain is Eukaryotic translation initiation factor 3 subunit M, found in Aspergillus fumigatus (strain CBS 144.89 / FGSC A1163 / CEA10) (Neosartorya fumigata).